Consider the following 476-residue polypeptide: Endonuclease SceI small subunit (476 aa).

Belongs to the LAGLIDADG endonuclease family. As to quaternary structure, endonuclease SceI (Endo.SceI) is a heterodimer of ENS2 and SSC1. The N-terminus is blocked.

The protein resides in the mitochondrion. Functionally, catalytic component of endonuclease SceI (Endo.SceI), which cleaves specifically at multiple sites on mitochondrial DNA and produces double-stranded breaks. The sequence is that of Endonuclease SceI small subunit (ENS2) from Saccharomyces cerevisiae (Baker's yeast).